The following is a 216-amino-acid chain: GTP cyclohydrolase 1 (216 aa).

Residues Cys109, His112, and Cys180 each contribute to the Zn(2+) site.

The protein belongs to the GTP cyclohydrolase I family. In terms of assembly, homomer.

It carries out the reaction GTP + H2O = 7,8-dihydroneopterin 3'-triphosphate + formate + H(+). It functions in the pathway cofactor biosynthesis; 7,8-dihydroneopterin triphosphate biosynthesis; 7,8-dihydroneopterin triphosphate from GTP: step 1/1. This is GTP cyclohydrolase 1 from Tolumonas auensis (strain DSM 9187 / NBRC 110442 / TA 4).